A 221-amino-acid polypeptide reads, in one-letter code: 7-carboxy-7-deazaguanine synthase (221 aa).

Residues 12–14 and R27 each bind substrate; that span reads ING. Positions 18–216 constitute a Radical SAM core domain; sequence KSGQLSVFIR…IQIHKIIWNP (199 aa). [4Fe-4S] cluster-binding residues include C31, C35, and C38. Mg(2+) is bound at residue T40. Substrate is bound at residue T73. Position 75 (G75) interacts with S-adenosyl-L-methionine.

Belongs to the radical SAM superfamily. 7-carboxy-7-deazaguanine synthase family. Homodimer. The cofactor is [4Fe-4S] cluster. Requires S-adenosyl-L-methionine as cofactor. Mg(2+) serves as cofactor.

It carries out the reaction 6-carboxy-5,6,7,8-tetrahydropterin + H(+) = 7-carboxy-7-deazaguanine + NH4(+). Its pathway is purine metabolism; 7-cyano-7-deazaguanine biosynthesis. Catalyzes the complex heterocyclic radical-mediated conversion of 6-carboxy-5,6,7,8-tetrahydropterin (CPH4) to 7-carboxy-7-deazaguanine (CDG), a step common to the biosynthetic pathways of all 7-deazapurine-containing compounds. The sequence is that of 7-carboxy-7-deazaguanine synthase from Clostridium acetobutylicum (strain ATCC 824 / DSM 792 / JCM 1419 / IAM 19013 / LMG 5710 / NBRC 13948 / NRRL B-527 / VKM B-1787 / 2291 / W).